The following is a 524-amino-acid chain: NAD(P)H-quinone oxidoreductase chain 4, chloroplastic (524 aa).

The next 14 membrane-spanning stretches (helical) occupy residues 4–24 (YPWLTIITLFPISAGLLIPLI), 31–51 (LIRWYALGICLIDFLLMTYVF), 87–107 (IALVLLTGFITTLATLAAWPV), 113–133 (LFYFLMLAMYSGQLGLFLAQD), 134–154 (LLLFFFMWELELIPVYLLLSM), 167–187 (FILYTAGGSIFLLAAILTISL), 211–231 (ILVYLGFLIAYAVKLPVFPFH), 242–262 (HYSTCMLLAGILLKMGGYGFI), 275–295 (IFAPWLVALGAGQIVYAALVS), 308–328 (SSVSHMGFVLIGAGSFSDLGL), 330–350 (GAILQMISHGLIGAGLFFLAG), 386–406 (LALPGMSGFVAELMIFLGIVA), 417–437 (IITCVEGIGIILTPIYLLSMV), and 465–485 (VFIILSLLVPMLGIGFYPDLT).

The protein belongs to the complex I subunit 4 family.

It is found in the plastid. It localises to the chloroplast thylakoid membrane. It catalyses the reaction a plastoquinone + NADH + (n+1) H(+)(in) = a plastoquinol + NAD(+) + n H(+)(out). The enzyme catalyses a plastoquinone + NADPH + (n+1) H(+)(in) = a plastoquinol + NADP(+) + n H(+)(out). This chain is NAD(P)H-quinone oxidoreductase chain 4, chloroplastic, found in Staurastrum punctulatum (Green alga).